The chain runs to 439 residues: Trigger factor (439 aa).

Residues 175–260 enclose the PPIase FKBP-type domain; sequence SDKLVIDYQN…VKSVYVMKGM (86 aa).

Belongs to the FKBP-type PPIase family. Tig subfamily.

Its subcellular location is the cytoplasm. The catalysed reaction is [protein]-peptidylproline (omega=180) = [protein]-peptidylproline (omega=0). In terms of biological role, involved in protein export. Acts as a chaperone by maintaining the newly synthesized protein in an open conformation. Functions as a peptidyl-prolyl cis-trans isomerase. The protein is Trigger factor of Ehrlichia chaffeensis (strain ATCC CRL-10679 / Arkansas).